Consider the following 101-residue polypeptide: Small ribosomal subunit protein uS14A (101 aa).

The interval 31-59 (IRSPASSPEQRVAAQSELNRQPRDASAVR) is disordered.

This sequence belongs to the universal ribosomal protein uS14 family. As to quaternary structure, part of the 30S ribosomal subunit. Contacts proteins S3 and S10.

Its function is as follows. Binds 16S rRNA, required for the assembly of 30S particles and may also be responsible for determining the conformation of the 16S rRNA at the A site. The chain is Small ribosomal subunit protein uS14A from Mycobacteroides abscessus (strain ATCC 19977 / DSM 44196 / CCUG 20993 / CIP 104536 / JCM 13569 / NCTC 13031 / TMC 1543 / L948) (Mycobacterium abscessus).